Consider the following 164-residue polypeptide: Crossover junction endodeoxyribonuclease RuvC (164 aa).

Catalysis depends on residues Asp-7, Glu-66, and Asp-138. Mg(2+)-binding residues include Asp-7, Glu-66, and Asp-138.

It belongs to the RuvC family. Homodimer which binds Holliday junction (HJ) DNA. The HJ becomes 2-fold symmetrical on binding to RuvC with unstacked arms; it has a different conformation from HJ DNA in complex with RuvA. In the full resolvosome a probable DNA-RuvA(4)-RuvB(12)-RuvC(2) complex forms which resolves the HJ. Requires Mg(2+) as cofactor.

It is found in the cytoplasm. It catalyses the reaction Endonucleolytic cleavage at a junction such as a reciprocal single-stranded crossover between two homologous DNA duplexes (Holliday junction).. The RuvA-RuvB-RuvC complex processes Holliday junction (HJ) DNA during genetic recombination and DNA repair. Endonuclease that resolves HJ intermediates. Cleaves cruciform DNA by making single-stranded nicks across the HJ at symmetrical positions within the homologous arms, yielding a 5'-phosphate and a 3'-hydroxyl group; requires a central core of homology in the junction. The consensus cleavage sequence is 5'-(A/T)TT(C/G)-3'. Cleavage occurs on the 3'-side of the TT dinucleotide at the point of strand exchange. HJ branch migration catalyzed by RuvA-RuvB allows RuvC to scan DNA until it finds its consensus sequence, where it cleaves and resolves the cruciform DNA. The protein is Crossover junction endodeoxyribonuclease RuvC of Paracoccus denitrificans (strain Pd 1222).